Here is a 408-residue protein sequence, read N- to C-terminus: CinA-like protein (408 aa).

The protein belongs to the CinA family.

In Thermotoga maritima (strain ATCC 43589 / DSM 3109 / JCM 10099 / NBRC 100826 / MSB8), this protein is CinA-like protein.